Consider the following 450-residue polypeptide: MSRRYFGTDGIRGRANGLITPELALKVGQAAGLVFQRGDHRHRVVIGKDTRLSGYMIENAMVAGFTSVGMDVLLVGPMPTPAVAMLTKSMRADLGVMISASHNMFEDNGIKLFGPLGFKLSDDVEKQIEQLLDEPMDKKLSESASLGRARRIDGVHDRYIEFAKRTLPRDLSLDGLRVVVDCANGAAYKVVPEALWELGADVISIGVEPDGFNINKECGSTSPEALCRKVREMRADIGIALDGDADRVIMVDERGHVIDGDQLLAVIAQSWKEDGRLARPGIVATVMSNLGLERFLASEGIELVRTSVGDRYVLEAMLRDGYNVGGEASGHIILSDYATTGDGFVAALQILAVVQKLGRPVSEVCHRFDPLPQILKNVRYRAGRPLDDAGVQSAISDAEKRLNGHGRLLIRPSGTEPVIRVMGEGEDRIMVEEVVDTIVDALGNASAAAA.

Serine 101 (phosphoserine intermediate) is an active-site residue. Mg(2+) contacts are provided by serine 101, aspartate 242, aspartate 244, and aspartate 246. Residue serine 101 is modified to Phosphoserine.

Belongs to the phosphohexose mutase family. It depends on Mg(2+) as a cofactor. In terms of processing, activated by phosphorylation.

It carries out the reaction alpha-D-glucosamine 1-phosphate = D-glucosamine 6-phosphate. Functionally, catalyzes the conversion of glucosamine-6-phosphate to glucosamine-1-phosphate. The sequence is that of Phosphoglucosamine mutase from Rhodopseudomonas palustris (strain HaA2).